The sequence spans 199 residues: MGQKAPDFTVNTSKGPVTLSSYRGKWVLLFSHPGDFTPVCTTEFIAFTERYKDFQALGVELLGLSIDSVYSHIAWIRDIKEHFGIEIPFPIIADIDKEVARQYNLIDEKSGATVRGVFIIDPNQIVRWMIYYPAETGRNIDEIIRVIKALQFNWERKLATPANWQPGQEGIEGAPSTVDASLKRDGEPGVKTWYLKFVK.

Residues 1–152 enclose the Thioredoxin domain; it reads MGQKAPDFTV…IIRVIKALQF (152 aa). The active-site Cysteine sulfenic acid (-SOH) intermediate is the Cys-40. Arg-115 is a binding site for substrate.

Belongs to the peroxiredoxin family. Prx6 subfamily. As to quaternary structure, homodecamer. Pentamer of dimers that assemble into a ring structure.

The protein localises to the cytoplasm. It catalyses the reaction a hydroperoxide + [thioredoxin]-dithiol = an alcohol + [thioredoxin]-disulfide + H2O. Thiol-specific peroxidase that catalyzes the reduction of hydrogen peroxide and organic hydroperoxides to water and alcohols, respectively. Plays a role in cell protection against oxidative stress by detoxifying peroxides. In Thermoplasma acidophilum (strain ATCC 25905 / DSM 1728 / JCM 9062 / NBRC 15155 / AMRC-C165), this protein is Peroxiredoxin 2.